A 319-amino-acid chain; its full sequence is Acetyl-coenzyme A carboxylase carboxyl transferase subunit alpha (319 aa).

Positions 32–293 (NVETEVRALR…KAVLLNELDA (262 aa)) constitute a CoA carboxyltransferase C-terminal domain.

The protein belongs to the AccA family. As to quaternary structure, acetyl-CoA carboxylase is a heterohexamer composed of biotin carboxyl carrier protein (AccB), biotin carboxylase (AccC) and two subunits each of ACCase subunit alpha (AccA) and ACCase subunit beta (AccD).

It is found in the cytoplasm. The enzyme catalyses N(6)-carboxybiotinyl-L-lysyl-[protein] + acetyl-CoA = N(6)-biotinyl-L-lysyl-[protein] + malonyl-CoA. The protein operates within lipid metabolism; malonyl-CoA biosynthesis; malonyl-CoA from acetyl-CoA: step 1/1. Functionally, component of the acetyl coenzyme A carboxylase (ACC) complex. First, biotin carboxylase catalyzes the carboxylation of biotin on its carrier protein (BCCP) and then the CO(2) group is transferred by the carboxyltransferase to acetyl-CoA to form malonyl-CoA. The chain is Acetyl-coenzyme A carboxylase carboxyl transferase subunit alpha from Xanthomonas oryzae pv. oryzae (strain MAFF 311018).